The chain runs to 115 residues: T cell receptor delta variable 2 (115 aa).

The N-terminal stretch at 1–19 (MQRISSLIHLSLFWAGVMS) is a signal peptide. The Ig-like domain maps to 25-115 (PEHQTVPVSI…EGSYYCACDT (91 aa)). A disulfide bridge connects residues cysteine 42 and cysteine 111.

In terms of assembly, gamma-delta TR is a heterodimer composed of a gamma and delta chain; disulfide-linked. The gamma-delta TR is associated with the transmembrane signaling CD3 coreceptor proteins following the stoichiometry: a single gamma-delta TR heterodimer associates with one CD3D-CD3E heterodimer, one CD3G-CD3E heterodimer and one CD247 homodimer forming a stable octameric structure. Upon activation, gamma-delta TR complex associates with FCER1G to initiate intracellular signaling.

It localises to the cell membrane. Its function is as follows. V region of the variable domain of T cell receptor (TR) delta chain that participates in the antigen recognition. Gamma-delta TRs recognize a variety of self and foreign non-peptide antigens frequently expressed at the epithelial boundaries between the host and external environment, including endogenous lipids presented by MH-like protein CD1D and phosphoantigens presented by butyrophilin-like molecule BTN3A1. Upon antigen recognition induces rapid, innate-like immune responses involved in pathogen clearance and tissue repair. Binding of gamma-delta TR complex to antigen triggers phosphorylation of immunoreceptor tyrosine-based activation motifs (ITAMs) in the CD3 chains by the LCK and FYN kinases, allowing the recruitment, phosphorylation, and activation of ZAP70 that facilitates phosphorylation of the scaffolding proteins LCP2 and LAT. This lead to the formation of a supramolecular signalosome that recruits the phospholipase PLCG1, resulting in calcium mobilization and ERK activation, ultimately leading to T cell expansion and differentiation into effector cells. Gamma-delta TRs are produced through somatic rearrangement of a limited repertoire of variable (V), diversity (D), and joining (J) genes. The potential diversity of gamma-delta TRs is conferred by the unique ability to rearrange (D) genes in tandem and to utilize all three reading frames. The combinatorial diversity is considerably increased by the sequence exonuclease trimming and random nucleotide (N) region additions which occur during the V-(D)-J rearrangements. The protein is T cell receptor delta variable 2 of Homo sapiens (Human).